A 318-amino-acid polypeptide reads, in one-letter code: MNHVSSTKPDTAPSKHLTSSHIDATDQNNKRLKKLTTKLRRKTGQAIADFNMIEEGDKVMVCLSGGKDSYTMLDMLLHMQKAAPISFSIIAVNLDQKQPGFPEHVLPNYLEGLGVDFAIIEEDTYSIVVDKVPEGKTTCSLCSRLRRGILYSNAIKMGVTKIALGHHRDDMLETLFLNMFHNGRLKSMPPKLTSDDGRNVVIRPLAYCAEQDIADYSILSGFPIIPCNLCGSQENLQRKQVKLMLAQWNTQFPGRIETMFKALQNVVPSHLADPGAFNFNDLDHSNSTSIEGDTAFDPLELTPVTKVDTLAVPITRID.

The disordered stretch occupies residues 1–29 (MNHVSSTKPDTAPSKHLTSSHIDATDQNN). Residues 16–27 (HLTSSHIDATDQ) show a composition bias toward polar residues. The PP-loop motif motif lies at 64–69 (SGGKDS). Residues Cys-139, Cys-142, and Cys-230 each contribute to the [4Fe-4S] cluster site.

This sequence belongs to the TtcA family. Homodimer. It depends on Mg(2+) as a cofactor. Requires [4Fe-4S] cluster as cofactor.

The protein localises to the cytoplasm. The enzyme catalyses cytidine(32) in tRNA + S-sulfanyl-L-cysteinyl-[cysteine desulfurase] + AH2 + ATP = 2-thiocytidine(32) in tRNA + L-cysteinyl-[cysteine desulfurase] + A + AMP + diphosphate + H(+). It participates in tRNA modification. Functionally, catalyzes the ATP-dependent 2-thiolation of cytidine in position 32 of tRNA, to form 2-thiocytidine (s(2)C32). The sulfur atoms are provided by the cysteine/cysteine desulfurase (IscS) system. In Pseudoalteromonas atlantica (strain T6c / ATCC BAA-1087), this protein is tRNA-cytidine(32) 2-sulfurtransferase.